Reading from the N-terminus, the 378-residue chain is Queuine tRNA-ribosyltransferase (378 aa).

Residue Asp92 is the Proton acceptor of the active site. Residues 92 to 96 (DSGGF), Asp146, Gln188, and Gly215 each bind substrate. Residues 246–252 (GVGTHLE) are RNA binding. Residue Asp265 is the Nucleophile of the active site. The segment at 270–274 (TRLAR) is RNA binding; important for wobble base 34 recognition. Residues Cys303, Cys305, Cys308, and His334 each coordinate Zn(2+).

This sequence belongs to the queuine tRNA-ribosyltransferase family. In terms of assembly, homodimer. Within each dimer, one monomer is responsible for RNA recognition and catalysis, while the other monomer binds to the replacement base PreQ1. Zn(2+) is required as a cofactor.

It catalyses the reaction 7-aminomethyl-7-carbaguanine + guanosine(34) in tRNA = 7-aminomethyl-7-carbaguanosine(34) in tRNA + guanine. The protein operates within tRNA modification; tRNA-queuosine biosynthesis. Catalyzes the base-exchange of a guanine (G) residue with the queuine precursor 7-aminomethyl-7-deazaguanine (PreQ1) at position 34 (anticodon wobble position) in tRNAs with GU(N) anticodons (tRNA-Asp, -Asn, -His and -Tyr). Catalysis occurs through a double-displacement mechanism. The nucleophile active site attacks the C1' of nucleotide 34 to detach the guanine base from the RNA, forming a covalent enzyme-RNA intermediate. The proton acceptor active site deprotonates the incoming PreQ1, allowing a nucleophilic attack on the C1' of the ribose to form the product. After dissociation, two additional enzymatic reactions on the tRNA convert PreQ1 to queuine (Q), resulting in the hypermodified nucleoside queuosine (7-(((4,5-cis-dihydroxy-2-cyclopenten-1-yl)amino)methyl)-7-deazaguanosine). The sequence is that of Queuine tRNA-ribosyltransferase from Thermosynechococcus vestitus (strain NIES-2133 / IAM M-273 / BP-1).